A 572-amino-acid polypeptide reads, in one-letter code: Pentatricopeptide repeat-containing protein At5g15010, mitochondrial (572 aa).

The N-terminal 57 residues, 1-57 (MRGIFLIRSRLSIFRAPAVKCLRFSNVLPSLSNNCIVRLYMEPPVACVLPLGLCSMF), are a transit peptide targeting the mitochondrion. 10 PPR repeats span residues 160 to 194 (SVRE…SPSL), 196 to 230 (NSQT…KLEM), 231 to 261 (GIDD…NKDK), 265 to 300 (DAKS…GVKH), 301 to 335 (DVVS…CIEP), 336 to 371 (DRKV…GIEP), 372 to 406 (NVVT…GLFP), 412 to 438 (HAFM…GCEP), 439 to 473 (TVET…TVGP), and 474 to 508 (DLSS…GMRP).

It belongs to the PPR family. P subfamily.

Its subcellular location is the mitochondrion. This chain is Pentatricopeptide repeat-containing protein At5g15010, mitochondrial, found in Arabidopsis thaliana (Mouse-ear cress).